We begin with the raw amino-acid sequence, 839 residues long: Thymine dioxygenase JBP1 (839 aa).

Positions 86-288 are thymine dioxygenase; the sequence is KVCGVLIPKA…RLSCVFYYRA (203 aa). Fe cation-binding residues include His213, Asp215, and His263. Arg279 contributes to the 2-oxoglutarate binding site. The segment at 415–583 is DNA-binding JBP1 domain; that stretch reads KGDILNEAMN…EIEQARRRAP (169 aa).

Belongs to the TET family. JBP1 subfamily. Monomer. Binds to DNA as a monomer. Requires Fe(2+) as cofactor.

The protein resides in the nucleus. The catalysed reaction is thymine + 2-oxoglutarate + O2 = 5-hydroxymethyluracil + succinate + CO2. Dioxygenase that catalyzes the first step of DNA base J (beta-d-glucosyl-HOMedU) biosynthesis by converting thymine to 5-hydroxymethyluracil (HOMedU). DNA base J is a hypermodified thymidine residue found in the genome of kinetoplastid parasites, which is localized primarily to repetitive DNA, namely the telomeres, and is implicated in the regulation of antigenic variation. Also specifically binds to base J-containing DNA (J-DNA). Involved in propagation and maintenance of DNA base J synthesis initiated by JBP2 by specifically binding already synthesized DNA base J and propagating J synthesis. Thymine dioxygenase activity and J-DNA-binding are independent functions. This is Thymine dioxygenase JBP1 (JBP1) from Trypanosoma brucei brucei.